Here is a 2208-residue protein sequence, read N- to C-terminus: RNA-directed RNA polymerase L (2208 aa).

The interval 26-284 (KDALLSQVHP…LHQDSDTINC (259 aa)) is endonuclease. Residues Glu51, Asp89, and Glu102 each contribute to the Mn(2+) site. Lys115 is an active-site residue. In terms of domain architecture, RdRp catalytic spans 1171–1367 (CDMKMAVNNG…YLSSKLNKFV (197 aa)). Asp1329 provides a ligand contact to Mg(2+).

It belongs to the Bunyavirales RNA polymerase family. As to quaternary structure, homomultimer; the oligomeric structure is essential for the polymerase activity. Interacts with nucleoprotein N. Interacts with protein Z; this interaction inhibits viral transcription and replication, Z partially blocks the product exit tunnel for the releasing nascent RNA product. Requires Mn(2+) as cofactor. Mg(2+) is required as a cofactor.

The protein localises to the virion. It is found in the host cytoplasm. The catalysed reaction is RNA(n) + a ribonucleoside 5'-triphosphate = RNA(n+1) + diphosphate. Functionally, RNA-dependent RNA polymerase, which is responsible for the replication and transcription of the viral RNA genome using antigenomic RNA as an intermediate. During transcription, synthesizes subgenomic RNAs and assures their capping by a cap-snatching mechanism, which involves the endonuclease activity cleaving the host capped pre-mRNAs. These short capped RNAs are then used as primers for viral transcription. The 3'-end of subgenomic mRNAs molecules are heterogeneous and not polyadenylated. The replicase function is to direct synthesis of antigenomic and genomic RNA which are encapsidated and non capped. As a consequence of the use of the same enzyme for both transcription and replication, these mechanisms need to be well coordinated. These processes may be regulated by proteins N and Z in a dose-dependent manner. Z protein inhibits the viral polymerase L und thus the viral transcription and RNA synthesis. The chain is RNA-directed RNA polymerase L from Homo sapiens (Human).